A 290-amino-acid chain; its full sequence is Alpha-1,2-colitosyltransferase (290 aa).

This sequence belongs to the glycosyltransferase 11 family. Requires Does not require a metal cofactor. as cofactor.

It carries out the reaction GDP-beta-L-colitose + beta-D-galactosyl-(1-&gt;3)-N-acetyl-D-glucosamine = alpha-L-colitosyl-(1-&gt;2)-beta-D-galactosyl-(1-&gt;3)-N-acetyl-D-glucosamine + GDP + H(+). The protein operates within bacterial outer membrane biogenesis; LPS O-antigen biosynthesis. Its activity is regulated as follows. Addition of metal ions dramatically decreases the activity to 0-40%. Functionally, involved in the biosynthesis of the lipopolysaccharide (LPS) O-antigen region. Catalyzes the transfer of colitose from GDP-colitose to the galactose residue of beta-Gal-(1-&gt;3)-GlcNAc (lacto-N-biose) via an alpha1,2-linkage. Is specific for beta-Gal-(1-&gt;3)-GlcNAc, but can use GDP-L-fucose as the sugar donor with almost the same efficiency as GDP-L-colitose. In Escherichia coli, this protein is Alpha-1,2-colitosyltransferase.